We begin with the raw amino-acid sequence, 180 residues long: Large ribosomal subunit protein uL5 (180 aa).

The protein belongs to the universal ribosomal protein uL5 family. As to quaternary structure, part of the 50S ribosomal subunit; part of the 5S rRNA/L5/L18/L25 subcomplex. Contacts the 5S rRNA and the P site tRNA. Forms a bridge to the 30S subunit in the 70S ribosome.

Its function is as follows. This is one of the proteins that bind and probably mediate the attachment of the 5S RNA into the large ribosomal subunit, where it forms part of the central protuberance. In the 70S ribosome it contacts protein S13 of the 30S subunit (bridge B1b), connecting the 2 subunits; this bridge is implicated in subunit movement. Contacts the P site tRNA; the 5S rRNA and some of its associated proteins might help stabilize positioning of ribosome-bound tRNAs. The chain is Large ribosomal subunit protein uL5 from Stenotrophomonas maltophilia (strain K279a).